Consider the following 267-residue polypeptide: Undecaprenyl-diphosphatase (267 aa).

A run of 7 helical transmembrane segments spans residues 1–21 (MSLFTLFLLALVQGITEFLPI), 40–60 (GQAIDVAVHVGTLGAVILYFW), 85–105 (LAFLLIIATIPVIIFGLFLEV), 112–132 (LRSIAVIGWTMLIFGLVLYWA), 189–209 (AMLMSIPTIIATGVFAGAEVI), 219–239 (DGAIAAALSFLAALAALTLMF), and 245–265 (VSFTPYVIYRVILGVILLVIA).

This sequence belongs to the UppP family.

The protein localises to the cell inner membrane. It carries out the reaction di-trans,octa-cis-undecaprenyl diphosphate + H2O = di-trans,octa-cis-undecaprenyl phosphate + phosphate + H(+). In terms of biological role, catalyzes the dephosphorylation of undecaprenyl diphosphate (UPP). Confers resistance to bacitracin. The sequence is that of Undecaprenyl-diphosphatase from Jannaschia sp. (strain CCS1).